We begin with the raw amino-acid sequence, 162 residues long: UPF0114 protein Sfri_3655 (162 aa).

The next 3 helical transmembrane spans lie at 15–35 (IMAP…IKFF), 53–73 (LVLI…LIMV), and 136–156 (IMWY…MGYL).

This sequence belongs to the UPF0114 family.

The protein resides in the cell membrane. This Shewanella frigidimarina (strain NCIMB 400) protein is UPF0114 protein Sfri_3655.